The sequence spans 420 residues: Glycogen synthase kinase-3 beta (420 aa).

Residues 1–22 (MSGRPRTTSFAESCKPVQQPSA) show a composition bias toward polar residues. The tract at residues 1–53 (MSGRPRTTSFAESCKPVQQPSAFGSMKVSRDKDGSKVTTVVATPGQGPDRPQE) is disordered. S9 bears the Phosphoserine; by PKB/AKT1, RPS6KA3 and SGK3 mark. C14 carries S-palmitoyl cysteine lipidation. Residues 56–340 (YTDTKVIGNG…PLEACAHSFF (285 aa)) form the Protein kinase domain. ATP is bound by residues 62 to 70 (IGNGSFGVV) and K85. D181 functions as the Proton acceptor in the catalytic mechanism. A Phosphotyrosine modification is found at Y216. Low complexity predominate over residues 386-401 (AAASTPTNATAASDAN). The interval 386 to 420 (AAASTPTNATAASDANTGDRGQTNNAASASASNST) is disordered. Phosphoserine is present on S389. Phosphothreonine is present on residues T390 and T402. Over residues 409–420 (NNAASASASNST) the composition is skewed to low complexity.

This sequence belongs to the protein kinase superfamily. CMGC Ser/Thr protein kinase family. GSK-3 subfamily. In terms of assembly, monomer. Interacts with ARRB2, DISC1 and ZBED3. Interacts with CABYR, MMP2, MUC1, NIN and PRUNE1. Interacts with AXIN1; the interaction mediates hyperphosphorylation of CTNNB1 leading to its ubiquitination and destruction. Interacts with and phosphorylates SNAI1. Interacts with DNM1L (via a C-terminal domain). Found in a complex composed of MACF1, APC, AXIN1, CTNNB1 and GSK3B. Interacts with SGK3. Interacts with DAB2IP (via C2 domain); the interaction stimulates GSK3B kinase activation. Interacts (via C2 domain) with PPP2CA. Interacts with the CLOCK-BMAL1 heterodimer. Interacts with the BMAL1. Interacts with CTNND2. Interacts with NCYM. The complex composed, at least, of APC, CTNNB1 and GSK3B interacts with JPT1; the interaction requires the inactive form of GSK3B (phosphorylated at 'Ser-9'). Forms a complex composed of PRKAR2A or PRKAR2B, GSK3B and GSKIP through GSKIP interaction; facilitates PKA-induced phosphorylation and regulates GSK3B activity. Interacts with GSKIP. Interacts with GID8. Interacts with PIWIL2. Interacts with LMBR1L. Interacts with DDX3X. Interacts with BIRC2. Interacts with TNFRSF10B; TNFRSF10B stimulation inhibits GSK3B kinase activity. Interacts with RICTOR; the interaction results in phosphorylation of RICTOR at 'Thr-1695' by GSK3B which facilitates FBXW7-mediated ubiquitination and subsequent degradation of RICTOR. Found in a complex with SLC39A6, SLC39A10 and with GSK3B that controls NCAM1 phosphorylation. Interacts with PKP3 (via ARM repeats); the interaction may be involved in PKP3 protein degradation. Post-translationally, phosphorylated by AKT1 and ILK1. Upon insulin-mediated signaling, the activated PKB/AKT1 protein kinase phosphorylates and deactivates GSK3B, resulting in the dephosphorylation and activation of GYS1. Activated by phosphorylation at Tyr-216. Inactivated by phosphorylation at Ser-9. Phosphorylated in a circadian manner in the hippocampus. In terms of processing, mono-ADP-ribosylation by PARP10 negatively regulates kinase activity. Palmitoylated. Palmitoylation by ZDHHC4 prevents AKT1-mediated phosphorylation. Expressed in testis, thymus, prostate and ovary and weakly expressed in lung, brain and kidney. Colocalizes with EIF2AK2/PKR and TAU in the Alzheimer disease (AD) brain.

The protein localises to the cytoplasm. It is found in the nucleus. Its subcellular location is the cell membrane. The catalysed reaction is L-seryl-[tau protein] + ATP = O-phospho-L-seryl-[tau protein] + ADP + H(+). It catalyses the reaction L-threonyl-[tau protein] + ATP = O-phospho-L-threonyl-[tau protein] + ADP + H(+). The enzyme catalyses L-seryl-[protein] + ATP = O-phospho-L-seryl-[protein] + ADP + H(+). It carries out the reaction L-threonyl-[protein] + ATP = O-phospho-L-threonyl-[protein] + ADP + H(+). Its activity is regulated as follows. Activated by phosphorylation at Tyr-216. In response to insulin, inhibited by phosphorylation at Ser-9 by PKB/AKT1 and RPS6KA3; phosphorylation at this site causes a conformational change, preventing access of substrates to the active site. Inhibited by IL22 treatment which also triggers phosphorylation at Ser-9, promoting inactivation. Inhibited by lithium. Constitutively active protein kinase that acts as a negative regulator in the hormonal control of glucose homeostasis, Wnt signaling and regulation of transcription factors and microtubules, by phosphorylating and inactivating glycogen synthase (GYS1 or GYS2), EIF2B, CTNNB1/beta-catenin, APC, AXIN1, DPYSL2/CRMP2, JUN, NFATC1/NFATC, MAPT/TAU and MACF1. Requires primed phosphorylation of the majority of its substrates. In skeletal muscle, contributes to insulin regulation of glycogen synthesis by phosphorylating and inhibiting GYS1 activity and hence glycogen synthesis. May also mediate the development of insulin resistance by regulating activation of transcription factors. Regulates protein synthesis by controlling the activity of initiation factor 2B (EIF2BE/EIF2B5) in the same manner as glycogen synthase. In Wnt signaling, GSK3B forms a multimeric complex with APC, AXIN1 and CTNNB1/beta-catenin and phosphorylates the N-terminus of CTNNB1 leading to its degradation mediated by ubiquitin/proteasomes. Phosphorylates JUN at sites proximal to its DNA-binding domain, thereby reducing its affinity for DNA. Phosphorylates NFATC1/NFATC on conserved serine residues promoting NFATC1/NFATC nuclear export, shutting off NFATC1/NFATC gene regulation, and thereby opposing the action of calcineurin. Phosphorylates MAPT/TAU on 'Thr-548', decreasing significantly MAPT/TAU ability to bind and stabilize microtubules. MAPT/TAU is the principal component of neurofibrillary tangles in Alzheimer disease. Plays an important role in ERBB2-dependent stabilization of microtubules at the cell cortex. Phosphorylates MACF1, inhibiting its binding to microtubules which is critical for its role in bulge stem cell migration and skin wound repair. Probably regulates NF-kappa-B (NFKB1) at the transcriptional level and is required for the NF-kappa-B-mediated anti-apoptotic response to TNF-alpha (TNF/TNFA). Negatively regulates replication in pancreatic beta-cells, resulting in apoptosis, loss of beta-cells and diabetes. Through phosphorylation of the anti-apoptotic protein MCL1, may control cell apoptosis in response to growth factors deprivation. Phosphorylates MUC1 in breast cancer cells, decreasing the interaction of MUC1 with CTNNB1/beta-catenin. Is necessary for the establishment of neuronal polarity and axon outgrowth. Phosphorylates MARK2, leading to inhibition of its activity. Phosphorylates SIK1 at 'Thr-182', leading to sustainment of its activity. Phosphorylates ZC3HAV1 which enhances its antiviral activity. Phosphorylates SNAI1, leading to its ubiquitination and proteasomal degradation. Phosphorylates SFPQ at 'Thr-687' upon T-cell activation. Phosphorylates NR1D1 st 'Ser-55' and 'Ser-59' and stabilizes it by protecting it from proteasomal degradation. Regulates the circadian clock via phosphorylation of the major clock components including BMAL1, CLOCK and PER2. Phosphorylates FBXL2 at 'Thr-404' and primes it for ubiquitination by the SCF(FBXO3) complex and proteasomal degradation. Phosphorylates CLOCK AT 'Ser-427' and targets it for proteasomal degradation. Phosphorylates BMAL1 at 'Ser-17' and 'Ser-21' and primes it for ubiquitination and proteasomal degradation. Phosphorylates OGT at 'Ser-3' or 'Ser-4' which positively regulates its activity. Phosphorylates MYCN in neuroblastoma cells which may promote its degradation. Regulates the circadian rhythmicity of hippocampal long-term potentiation and BMAL1 and PER2 expression. Acts as a regulator of autophagy by mediating phosphorylation of KAT5/TIP60 under starvation conditions, activating KAT5/TIP60 acetyltransferase activity and promoting acetylation of key autophagy regulators, such as ULK1 and RUBCNL/Pacer. Negatively regulates extrinsic apoptotic signaling pathway via death domain receptors. Promotes the formation of an anti-apoptotic complex, made of DDX3X, BRIC2 and GSK3B, at death receptors, including TNFRSF10B. The anti-apoptotic function is most effective with weak apoptotic signals and can be overcome by stronger stimulation. Phosphorylates E2F1, promoting the interaction between E2F1 and USP11, stabilizing E2F1 and promoting its activity. Phosphorylates mTORC2 complex component RICTOR at 'Ser-1235' in response to endoplasmic stress, inhibiting mTORC2. Phosphorylates mTORC2 complex component RICTOR at 'Thr-1695' which facilitates FBXW7-mediated ubiquitination and subsequent degradation of RICTOR. Phosphorylates FXR1, promoting FXR1 ubiquitination by the SCF(FBXO4) complex and FXR1 degradation by the proteasome. Phosphorylates interleukin-22 receptor subunit IL22RA1, preventing its proteasomal degradation. This is Glycogen synthase kinase-3 beta from Homo sapiens (Human).